Consider the following 257-residue polypeptide: 3-deoxy-manno-octulosonate cytidylyltransferase (257 aa).

The protein belongs to the KdsB family.

The protein localises to the cytoplasm. The catalysed reaction is 3-deoxy-alpha-D-manno-oct-2-ulosonate + CTP = CMP-3-deoxy-beta-D-manno-octulosonate + diphosphate. It participates in nucleotide-sugar biosynthesis; CMP-3-deoxy-D-manno-octulosonate biosynthesis; CMP-3-deoxy-D-manno-octulosonate from 3-deoxy-D-manno-octulosonate and CTP: step 1/1. The protein operates within bacterial outer membrane biogenesis; lipopolysaccharide biosynthesis. In terms of biological role, activates KDO (a required 8-carbon sugar) for incorporation into bacterial lipopolysaccharide in Gram-negative bacteria. In Xylella fastidiosa (strain 9a5c), this protein is 3-deoxy-manno-octulosonate cytidylyltransferase.